The sequence spans 793 residues: Serine/threonine-protein kinase MARK1 (793 aa).

A disordered region spans residues 1–40 (MSARTPLPTVNERDTENHTSVDGYTETHIPPTKSSSRQNI). Thr-5 carries the phosphothreonine modification. Positions 60–311 (YRLQKTIGKG…LEQIMKDRWM (252 aa)) constitute a Protein kinase domain. ATP is bound by residues 66 to 74 (IGKGNFAKV) and Lys-89. The active-site Proton acceptor is Asp-182. Position 208 is a phosphothreonine (Thr-208). Thr-215 carries the phosphothreonine; by LKB1 and TAOK1 modification. Ser-219 is modified (phosphoserine; by GSK3-beta). In terms of domain architecture, UBA spans 329–370 (DLNDAKRIDIMVTMGFARDEINDALVSQKYDEVMATYILLGR). 2 disordered regions span residues 377–499 (GGES…GGSM) and 517–697 (LQNG…KPRS). Residues 380-403 (SLSSGNLCQRSRPSSDLNNSTLQS) show a composition bias toward polar residues. Phosphoserine is present on residues Ser-382, Ser-390, Ser-393, Ser-403, Ser-423, and Ser-444. Residues 447 to 459 (SEQKEEWDKDTAR) are compositionally biased toward basic and acidic residues. The segment covering 462 to 473 (GSTTVGSKSEVT) has biased composition (polar residues). The residue at position 475 (Ser-475) is a Phosphoserine. Polar residues predominate over residues 487–499 (AGPSNNVYSGGSM). Low complexity-rich tracts occupy residues 523-547 (SSLT…GPSA) and 585-599 (PAAS…ASTP). Ser-588 is subject to Phosphoserine. Thr-613 bears the Phosphothreonine; by PKC/PRKCZ mark. The segment covering 647–657 (GTSTGIISKIT) has biased composition (polar residues). Basic and acidic residues-rich tracts occupy residues 661 to 676 (VRRD…RTDT) and 683 to 695 (EPKD…EAKP). The residue at position 666 (Ser-666) is a Phosphoserine. Residues 744–793 (DARQDSLVQWEMEVCKLPRLSLNGVRFKRISGTSIAFKNIASKIANELKL) form the KA1 domain.

It belongs to the protein kinase superfamily. CAMK Ser/Thr protein kinase family. SNF1 subfamily. In terms of assembly, interacts with MAPT/TAU. Requires Mg(2+) as cofactor. In terms of processing, phosphorylation at Thr-613 by PRKCZ/aPKC in polarized epithelial cells inhibits the kinase activity. Phosphorylated at Thr-215 by STK11/LKB1 in complex with STE20-related adapter-alpha (STRADA) pseudo kinase and CAB39. Phosphorylation at Thr-215 by TAOK1 activates the kinase activity, leading to phosphorylation and detachment of MAPT/TAU from microtubules. Phosphorylation at Ser-219 by GSK3-beta (GSK3B) inhibits the kinase activity. Highly expressed in brain and spleen and at lower levels in kidney and skeletal muscle.

The protein resides in the cell membrane. The protein localises to the cytoplasm. It is found in the cytoskeleton. Its subcellular location is the cell projection. It localises to the dendrite. The catalysed reaction is L-seryl-[protein] + ATP = O-phospho-L-seryl-[protein] + ADP + H(+). It carries out the reaction L-threonyl-[protein] + ATP = O-phospho-L-threonyl-[protein] + ADP + H(+). It catalyses the reaction L-seryl-[tau protein] + ATP = O-phospho-L-seryl-[tau protein] + ADP + H(+). The enzyme catalyses L-threonyl-[tau protein] + ATP = O-phospho-L-threonyl-[tau protein] + ADP + H(+). With respect to regulation, activated by phosphorylation on Thr-215. Inhibited by phosphorylation at Ser-219. Its function is as follows. Serine/threonine-protein kinase. Involved in cell polarity and microtubule dynamics regulation. Phosphorylates DCX, MAP2 and MAP4. Phosphorylates the microtubule-associated protein MAPT/TAU. Involved in cell polarity by phosphorylating the microtubule-associated proteins MAP2, MAP4 and MAPT/TAU at KXGS motifs, causing detachment from microtubules, and their disassembly. Involved in the regulation of neuronal migration through its dual activities in regulating cellular polarity and microtubule dynamics, possibly by phosphorylating and regulating DCX. Also acts as a positive regulator of the Wnt signaling pathway, probably by mediating phosphorylation of dishevelled proteins (DVL1, DVL2 and/or DVL3). This Rattus norvegicus (Rat) protein is Serine/threonine-protein kinase MARK1.